Reading from the N-terminus, the 497-residue chain is Glycerol kinase (497 aa).

Residue threonine 12 participates in ADP binding. Positions 12, 13, and 14 each coordinate ATP. A sn-glycerol 3-phosphate-binding site is contributed by threonine 12. Arginine 16 serves as a coordination point for ADP. Arginine 82, glutamate 83, tyrosine 133, and aspartate 243 together coordinate sn-glycerol 3-phosphate. Glycerol contacts are provided by arginine 82, glutamate 83, tyrosine 133, aspartate 243, and glutamine 244. The ADP site is built by threonine 265 and glycine 308. 4 residues coordinate ATP: threonine 265, glycine 308, glutamine 312, and glycine 409. Residue glycine 409 coordinates ADP.

The protein belongs to the FGGY kinase family.

The catalysed reaction is glycerol + ATP = sn-glycerol 3-phosphate + ADP + H(+). It functions in the pathway polyol metabolism; glycerol degradation via glycerol kinase pathway; sn-glycerol 3-phosphate from glycerol: step 1/1. Inhibited by fructose 1,6-bisphosphate (FBP). Functionally, key enzyme in the regulation of glycerol uptake and metabolism. Catalyzes the phosphorylation of glycerol to yield sn-glycerol 3-phosphate. This Dichelobacter nodosus (strain VCS1703A) protein is Glycerol kinase.